Reading from the N-terminus, the 563-residue chain is Putative solute carrier family 26 member 10P (563 aa).

The next 5 helical transmembrane spans lie at 45 to 65 (ALLASVPPVFGLYTSFFPVLI), 75 to 91 (LSTGTFAILSLMTGSAV), 116 to 136 (VGVAAAVAFGSGALMLGMFVL), 152 to 172 (ALTSGAALHVLLSQLPSLLGL), and 352 to 372 (LAGLFSCTVVLSVLLWLGPFF). Positions 406-541 (RVDFLLQVPG…VSVQDAAAYA (136 aa)) constitute an STAS domain.

Belongs to the SLC26A/SulP transporter (TC 2.A.53) family.

It is found in the membrane. In terms of biological role, chloride/bicarbonate exchanger. This Homo sapiens (Human) protein is Putative solute carrier family 26 member 10P (SLC26A10P).